We begin with the raw amino-acid sequence, 262 residues long: Spindlin-W (262 aa).

The disordered stretch occupies residues 1–49; that stretch reads MKTPFGKSPAQRSRADAGHTRVSASMMKKRTSHKKHRNNVGPSKPISQP. A compositionally biased stretch (basic residues) spans 27–38; the sequence is MKKRTSHKKHRN.

The protein belongs to the SPIN/STSY family. As to expression, expressed predominantly in ovarian granulosa and thecal cell.

The protein resides in the nucleus. In terms of biological role, may play a role in mitosis. This is Spindlin-W (SPINW) from Gallus gallus (Chicken).